The sequence spans 259 residues: Leucine-rich repeat-containing protein 3B (259 aa).

The signal sequence occupies residues 1 to 33; that stretch reads MNLVDLWLTRSLSMCLLLQSFVLMILCFHSASM. The LRRNT domain occupies 34-64; that stretch reads CPKGCLCSSSGGLNVTCSNANLKEIPRDLPP. Asn47 is a glycosylation site (N-linked (GlcNAc...) asparagine). LRR repeat units lie at residues 65 to 86, 89 to 110, and 114 to 135; these read ETVLLYLDSNQITSIPNEIFKD, QLRVLNLSKNGIEFIDEHAFKG, and TLQTLDLSDNRIQSVHKNAFNN. Asn94 is a glycosylation site (N-linked (GlcNAc...) asparagine). The LRRCT domain occupies 145 to 197; it reads NPWHCDCTLQQVLRSMVSNHETAHNVICKTSVLDEHAGRPFLNAANDADLCNL. The helical transmembrane segment at 205–225 threads the bilayer; that stretch reads AMLVTMFGWFTMVISYVVYYV.

It belongs to the LRRC3 family.

Its subcellular location is the membrane. This chain is Leucine-rich repeat-containing protein 3B (LRRC3B), found in Bos taurus (Bovine).